Consider the following 545-residue polypeptide: Chaperonin GroEL 2 (545 aa).

Residues 30–33, lysine 51, 87–91, glycine 415, and aspartate 496 contribute to the ATP site; these read TLGP and DGTTT.

The protein belongs to the chaperonin (HSP60) family. In terms of assembly, forms a cylinder of 14 subunits composed of two heptameric rings stacked back-to-back. Interacts with the co-chaperonin GroES.

It localises to the cytoplasm. The catalysed reaction is ATP + H2O + a folded polypeptide = ADP + phosphate + an unfolded polypeptide.. Together with its co-chaperonin GroES, plays an essential role in assisting protein folding. The GroEL-GroES system forms a nano-cage that allows encapsulation of the non-native substrate proteins and provides a physical environment optimized to promote and accelerate protein folding. The sequence is that of Chaperonin GroEL 2 from Nitrobacter winogradskyi (strain ATCC 25391 / DSM 10237 / CIP 104748 / NCIMB 11846 / Nb-255).